The chain runs to 398 residues: Bifunctional enzyme IspD/IspF (398 aa).

The interval 1-234 is 2-C-methyl-D-erythritol 4-phosphate cytidylyltransferase; sequence MPSSKRTAAI…ARLAAALGDI (234 aa). The interval 235 to 398 is 2-C-methyl-D-erythritol 2,4-cyclodiphosphate synthase; it reads RTGTGYDVHA…LPWNDKGRDT (164 aa). A divalent metal cation contacts are provided by Asp241 and His243. Residues 241–243 and 267–268 contribute to the 4-CDP-2-C-methyl-D-erythritol 2-phosphate site; these read DVH and HS. Position 275 (His275) interacts with a divalent metal cation. 4-CDP-2-C-methyl-D-erythritol 2-phosphate contacts are provided by residues 289–291, 365–368, Phe372, and Arg375; these read DIG and TTSE.

It in the N-terminal section; belongs to the IspD/TarI cytidylyltransferase family. IspD subfamily. This sequence in the C-terminal section; belongs to the IspF family. The cofactor is a divalent metal cation.

It carries out the reaction 2-C-methyl-D-erythritol 4-phosphate + CTP + H(+) = 4-CDP-2-C-methyl-D-erythritol + diphosphate. It catalyses the reaction 4-CDP-2-C-methyl-D-erythritol 2-phosphate = 2-C-methyl-D-erythritol 2,4-cyclic diphosphate + CMP. It functions in the pathway isoprenoid biosynthesis; isopentenyl diphosphate biosynthesis via DXP pathway; isopentenyl diphosphate from 1-deoxy-D-xylulose 5-phosphate: step 2/6. The protein operates within isoprenoid biosynthesis; isopentenyl diphosphate biosynthesis via DXP pathway; isopentenyl diphosphate from 1-deoxy-D-xylulose 5-phosphate: step 4/6. Its function is as follows. Bifunctional enzyme that catalyzes the formation of 4-diphosphocytidyl-2-C-methyl-D-erythritol from CTP and 2-C-methyl-D-erythritol 4-phosphate (MEP) (IspD), and catalyzes the conversion of 4-diphosphocytidyl-2-C-methyl-D-erythritol 2-phosphate (CDP-ME2P) to 2-C-methyl-D-erythritol 2,4-cyclodiphosphate (ME-CPP) with a corresponding release of cytidine 5-monophosphate (CMP) (IspF). In Nitrobacter winogradskyi (strain ATCC 25391 / DSM 10237 / CIP 104748 / NCIMB 11846 / Nb-255), this protein is Bifunctional enzyme IspD/IspF.